We begin with the raw amino-acid sequence, 851 residues long: DNA mismatch repair protein MutS (851 aa).

602–609 (GPNMSGKS) lines the ATP pocket.

Belongs to the DNA mismatch repair MutS family.

This protein is involved in the repair of mismatches in DNA. It is possible that it carries out the mismatch recognition step. This protein has a weak ATPase activity. The polypeptide is DNA mismatch repair protein MutS (Streptococcus pyogenes serotype M6 (strain ATCC BAA-946 / MGAS10394)).